A 402-amino-acid polypeptide reads, in one-letter code: Pyridinium-3,5-bisthiocarboxylic acid mononucleotide nickel insertion protein (402 aa).

It belongs to the LarC family.

The catalysed reaction is Ni(II)-pyridinium-3,5-bisthiocarboxylate mononucleotide = pyridinium-3,5-bisthiocarboxylate mononucleotide + Ni(2+). Its function is as follows. Involved in the biosynthesis of a nickel-pincer cofactor ((SCS)Ni(II) pincer complex). Binds Ni(2+), and functions in nickel delivery to pyridinium-3,5-bisthiocarboxylic acid mononucleotide (P2TMN), to form the mature cofactor. Is thus probably required for the activation of nickel-pincer cofactor-dependent enzymes. The protein is Pyridinium-3,5-bisthiocarboxylic acid mononucleotide nickel insertion protein of Desulfitobacterium hafniense (strain Y51).